Reading from the N-terminus, the 449-residue chain is MTSSVWQERRHGEDKQRRNDHRSPYQRDRARILHSAAFRRLQAKTQVLGVGMNDFYRTRLTHSLEVSQIGTGIAAQLRRKYPQHKQLLCSMSLLESLCLAHDIGHPPFGHGGEVALNYMMRDHGGFEGNGQTFRILSKLEPYTLDFGMNLCRRTMLGILKYPAPHSKLFVAGEHNEITNHRQLKPSQWPPVKGIFDDDNDIFAWVLEPLSEADRSRFTSTQQGSHPALHHYPHLRTQFKSFDCSIMELADDIAYAVHDLEDAIVMGIVTASQWHQDVAPTLTNSGDTWIRQELADIGNKLFSHEHHLRKDAIGTLVNGFVTAIVISEDDVFEEPLLRFNATLEPEFAIALNVLKQLVYKYVIRKPEIQMLEYKGQQIVMGLFEAFASDPERLLPLNTQERWRESEQQGLNSHRVLADYISGMTDEFAGRLYQQLFSPKAGSNVELSKEM.

Residues 1 to 27 (MTSSVWQERRHGEDKQRRNDHRSPYQR) are disordered. The span at 7–27 (QERRHGEDKQRRNDHRSPYQR) shows a compositional bias: basic and acidic residues. Residues 59–255 (RLTHSLEVSQ…MELADDIAYA (197 aa)) form the HD domain.

This sequence belongs to the dGTPase family. Type 2 subfamily.

The protein is Deoxyguanosinetriphosphate triphosphohydrolase-like protein of Shewanella baltica (strain OS223).